Reading from the N-terminus, the 514-residue chain is Histidine ammonia-lyase (514 aa).

The segment at residues alanine 143–glycine 145 is a cross-link (5-imidazolinone (Ala-Gly)). At serine 144 the chain carries 2,3-didehydroalanine (Ser).

The protein belongs to the PAL/histidase family. In terms of processing, contains an active site 4-methylidene-imidazol-5-one (MIO), which is formed autocatalytically by cyclization and dehydration of residues Ala-Ser-Gly.

The protein localises to the cytoplasm. The catalysed reaction is L-histidine = trans-urocanate + NH4(+). Its pathway is amino-acid degradation; L-histidine degradation into L-glutamate; N-formimidoyl-L-glutamate from L-histidine: step 1/3. In Photorhabdus laumondii subsp. laumondii (strain DSM 15139 / CIP 105565 / TT01) (Photorhabdus luminescens subsp. laumondii), this protein is Histidine ammonia-lyase.